Reading from the N-terminus, the 387-residue chain is Odorant receptor 94a (387 aa).

Residues 1–45 are Cytoplasmic-facing; the sequence is MDKHKDRIESMRLILQVMQLFGLWPWSLKSEEEWTFTGFVKRNYR. A helical transmembrane segment spans residues 46-66; that stretch reads FLLHLPITFTFIGLMWLEAFI. Topologically, residues 67-75 are extracellular; sequence SSNLEQAGQ. A helical membrane pass occupies residues 76-96; it reads VLYMSITEMALVVKILSIWHY. At 97-133 the chain is on the cytoplasmic side; the sequence is RTEAWRLMYELQHAPDYQLHNQEEVDFWRREQRFFKW. A helical transmembrane segment spans residues 134–154; it reads FFYIYILISLGVVYSGCTGVL. Residues 155-191 lie on the Extracellular side of the membrane; it reads FLEGYELPFAYYVPFEWQNERRYWFAYGYDMAGMTLT. A helical membrane pass occupies residues 192–212; sequence CISNITLDTLGCYFLFHISLL. The Cytoplasmic segment spans residues 213 to 255; sequence YRLLGLRLRETKNMKNDTIFGQQLRAIFIMHQRIRSLTLTCQR. A helical membrane pass occupies residues 256–276; sequence IVSPYILSQIILSALIICFSG. At 277–290 the chain is on the extracellular side; the sequence is YRLQHVGIRDNPGQ. The helical transmembrane segment at 291–311 threads the bilayer; sequence FISMLQFVSVMILQIYLPCYY. Residues 312–362 are Cytoplasmic-facing; that stretch reads GNEITVYANQLTNEVYHTNWLECRPPIRKLLNAYMEHLKKPVTIRAGNFFA. The chain crosses the membrane as a helical span at residues 363–383; that stretch reads VGLPIFVKTINNAYSFLALLL. N384 carries N-linked (GlcNAc...) asparagine glycosylation. Topologically, residues 384–387 are extracellular; the sequence is NVSN.

This sequence belongs to the insect chemoreceptor superfamily. Heteromeric odorant receptor channel (TC 1.A.69) family. Or2a subfamily. As to quaternary structure, interacts with Orco. Complexes exist early in the endomembrane system in olfactory sensory neurons (OSNs), coupling these complexes to the conserved ciliary trafficking pathway.

The protein localises to the cell membrane. Its function is as follows. Odorant receptor which mediates acceptance or avoidance behavior, depending on its substrates. The odorant receptor repertoire encodes a large collection of odor stimuli that vary widely in identity, intensity, and duration. May form a complex with Orco to form odorant-sensing units, providing sensitive and prolonged odorant signaling and calcium permeability. This chain is Odorant receptor 94a (Or94a), found in Drosophila melanogaster (Fruit fly).